The following is a 277-amino-acid chain: uncharacterized protein (277 aa).

Disordered regions lie at residues 33–168 and 210–277; these read KNDN…VTTR and NKLL…PIEF. A compositionally biased stretch (basic and acidic residues) spans 34–45; sequence NDNDERTAHEES. Residues 86-99 show a composition bias toward basic residues; sequence LKSKSKRKTKKGGS. Basic and acidic residues-rich tracts occupy residues 100 to 113, 151 to 168, and 216 to 230; these read KPRE…KHIV, AKEL…VTTR, and TNED…NKEK. A compositionally biased stretch (basic residues) spans 231 to 241; the sequence is DRKRRERRTAR. The segment covering 242 to 258 has biased composition (basic and acidic residues); the sequence is RKDERKQEKKQEKKQDN. Over residues 259–271 the composition is skewed to polar residues; it reads KTSQSFPSSTDMN.

Its subcellular location is the cytoplasm. This is an uncharacterized protein from Saccharomyces cerevisiae (strain ATCC 204508 / S288c) (Baker's yeast).